Reading from the N-terminus, the 209-residue chain is dTTP/UTP pyrophosphatase (209 aa).

The active-site Proton acceptor is the Asp79.

The protein belongs to the Maf family. YhdE subfamily. A divalent metal cation is required as a cofactor.

Its subcellular location is the cytoplasm. The catalysed reaction is dTTP + H2O = dTMP + diphosphate + H(+). The enzyme catalyses UTP + H2O = UMP + diphosphate + H(+). Its function is as follows. Nucleoside triphosphate pyrophosphatase that hydrolyzes dTTP and UTP. May have a dual role in cell division arrest and in preventing the incorporation of modified nucleotides into cellular nucleic acids. This Bradyrhizobium diazoefficiens (strain JCM 10833 / BCRC 13528 / IAM 13628 / NBRC 14792 / USDA 110) protein is dTTP/UTP pyrophosphatase.